A 314-amino-acid chain; its full sequence is Methionyl-tRNA formyltransferase (314 aa).

Residue 110–113 participates in (6S)-5,6,7,8-tetrahydrofolate binding; the sequence is SLLP.

It belongs to the Fmt family.

The enzyme catalyses L-methionyl-tRNA(fMet) + (6R)-10-formyltetrahydrofolate = N-formyl-L-methionyl-tRNA(fMet) + (6S)-5,6,7,8-tetrahydrofolate + H(+). Attaches a formyl group to the free amino group of methionyl-tRNA(fMet). The formyl group appears to play a dual role in the initiator identity of N-formylmethionyl-tRNA by promoting its recognition by IF2 and preventing the misappropriation of this tRNA by the elongation apparatus. The sequence is that of Methionyl-tRNA formyltransferase from Lactobacillus johnsonii (strain CNCM I-12250 / La1 / NCC 533).